A 465-amino-acid chain; its full sequence is UDP-N-acetylglucosamine 1-carboxyvinyltransferase (465 aa).

Phosphoenolpyruvate is bound at residue 22–23; sequence KN. A UDP-N-acetyl-alpha-D-glucosamine-binding site is contributed by Arg-94. The Proton donor role is filled by Cys-119. 2-(S-cysteinyl)pyruvic acid O-phosphothioketal is present on Cys-119. UDP-N-acetyl-alpha-D-glucosamine is bound by residues Asp-313 and Val-335.

The protein belongs to the EPSP synthase family. MurA subfamily.

The protein localises to the cytoplasm. It carries out the reaction phosphoenolpyruvate + UDP-N-acetyl-alpha-D-glucosamine = UDP-N-acetyl-3-O-(1-carboxyvinyl)-alpha-D-glucosamine + phosphate. It functions in the pathway cell wall biogenesis; peptidoglycan biosynthesis. Its function is as follows. Cell wall formation. Adds enolpyruvyl to UDP-N-acetylglucosamine. The protein is UDP-N-acetylglucosamine 1-carboxyvinyltransferase of Protochlamydia amoebophila (strain UWE25).